The chain runs to 161 residues: Photosystem II extrinsic protein V (161 aa).

A signal peptide spans 1 to 25 (MKKFFISVVFIVLLTFTTFINSATA). Cys61, Cys64, His65, and His116 together coordinate heme c.

The protein belongs to the cytochrome c family. PsbV subfamily. In terms of assembly, PSII is composed of 1 copy each of membrane proteins PsbA, PsbB, PsbC, PsbD, PsbE, PsbF, PsbH, PsbI, PsbJ, PsbK, PsbL, PsbM, PsbT, PsbX, PsbY, PsbZ, Psb30/Ycf12, peripheral proteins PsbO, CyanoQ (PsbQ), PsbU, PsbV and a large number of cofactors. It forms dimeric complexes. It depends on heme c as a cofactor.

It localises to the cellular thylakoid membrane. Functionally, one of the extrinsic, lumenal subunits of photosystem II (PSII). PSII is a light-driven water plastoquinone oxidoreductase, using light energy to abstract electrons from H(2)O, generating a proton gradient subsequently used for ATP formation. The extrinsic proteins stabilize the structure of photosystem II oxygen-evolving complex (OEC), the ion environment of oxygen evolution and protect the OEC against heat-induced inactivation. Low-potential cytochrome c that plays a role in the OEC of PSII. This is Photosystem II extrinsic protein V from Trichodesmium erythraeum (strain IMS101).